The primary structure comprises 428 residues: Divergent protein kinase domain 1A (428 aa).

Topologically, residues M1–K27 are cytoplasmic. The chain crosses the membrane as a helical span at residues Y28–S48. The Lumenal segment spans residues T49–S428.

This sequence belongs to the DIPK family. In terms of processing, among the many cysteines in the lumenal domain, most are probably involved in disulfide bonds.

The protein resides in the endoplasmic reticulum membrane. This Homo sapiens (Human) protein is Divergent protein kinase domain 1A.